The following is a 294-amino-acid chain: Porphobilinogen deaminase (294 aa).

S-(dipyrrolylmethanemethyl)cysteine is present on Cys232.

Belongs to the HMBS family. Monomer. Dipyrromethane serves as cofactor.

It carries out the reaction 4 porphobilinogen + H2O = hydroxymethylbilane + 4 NH4(+). Its pathway is porphyrin-containing compound metabolism; protoporphyrin-IX biosynthesis; coproporphyrinogen-III from 5-aminolevulinate: step 2/4. Its function is as follows. Tetrapolymerization of the monopyrrole PBG into the hydroxymethylbilane pre-uroporphyrinogen in several discrete steps. The protein is Porphobilinogen deaminase of Corynebacterium diphtheriae (strain ATCC 700971 / NCTC 13129 / Biotype gravis).